Consider the following 234-residue polypeptide: Large ribosomal subunit protein uL1 (234 aa).

This sequence belongs to the universal ribosomal protein uL1 family. In terms of assembly, part of the 50S ribosomal subunit.

Functionally, binds directly to 23S rRNA. The L1 stalk is quite mobile in the ribosome, and is involved in E site tRNA release. Its function is as follows. Protein L1 is also a translational repressor protein, it controls the translation of the L11 operon by binding to its mRNA. The sequence is that of Large ribosomal subunit protein uL1 from Corynebacterium aurimucosum (strain ATCC 700975 / DSM 44827 / CIP 107346 / CN-1) (Corynebacterium nigricans).